A 383-amino-acid polypeptide reads, in one-letter code: GTP-binding protein 10 homolog (383 aa).

In terms of domain architecture, Obg spans 22 to 157 (PSFLDTLRLA…RIVNLDLKLI (136 aa)). The OBG-type G domain occupies 158-353 (ADVGLVGFPN…VKSQLRRTLV (196 aa)). GTP-binding positions include 164–171 (GFPNAGKS), 211–215 (DLPGL), and 287–290 (NKMD).

Belongs to the TRAFAC class OBG-HflX-like GTPase superfamily. OBG GTPase family.

It is found in the nucleus. The protein resides in the nucleolus. Functionally, may be involved in the ribosome maturation process. The chain is GTP-binding protein 10 homolog from Drosophila pseudoobscura pseudoobscura (Fruit fly).